The following is a 356-amino-acid chain: Probable farnesyl diphosphate synthase DDB_G0278823 (356 aa).

The isopentenyl diphosphate site is built by lysine 55, arginine 58, and glutamine 94. The Mg(2+) site is built by aspartate 101 and aspartate 105. Arginine 110 lines the dimethylallyl diphosphate pocket. Arginine 111 provides a ligand contact to isopentenyl diphosphate. Dimethylallyl diphosphate is bound by residues lysine 203, threonine 204, glutamine 243, lysine 260, and lysine 269.

This sequence belongs to the FPP/GGPP synthase family. Requires Mg(2+) as cofactor.

It localises to the cytoplasm. The catalysed reaction is isopentenyl diphosphate + dimethylallyl diphosphate = (2E)-geranyl diphosphate + diphosphate. It catalyses the reaction isopentenyl diphosphate + (2E)-geranyl diphosphate = (2E,6E)-farnesyl diphosphate + diphosphate. Its pathway is isoprenoid biosynthesis; farnesyl diphosphate biosynthesis; farnesyl diphosphate from geranyl diphosphate and isopentenyl diphosphate: step 1/1. It participates in isoprenoid biosynthesis; geranyl diphosphate biosynthesis; geranyl diphosphate from dimethylallyl diphosphate and isopentenyl diphosphate: step 1/1. With respect to regulation, inhibited by aminobisphosphonate drugs (aBP), such as risedronate and alendronate. In terms of biological role, key enzyme in isoprenoid biosynthesis which catalyzes the formation of farnesyl diphosphate (FPP), a sterol precursor. This chain is Probable farnesyl diphosphate synthase DDB_G0278823, found in Dictyostelium discoideum (Social amoeba).